A 1447-amino-acid polypeptide reads, in one-letter code: Calcium-dependent secretion activator (1447 aa).

The span at 1–15 (MIDPSSSEEEGEDDA) shows a compositional bias: acidic residues. Disordered stretches follow at residues 1–35 (MIDP…TSAV) and 101–163 (DTGN…EEEE). Composition is skewed to polar residues over residues 18 to 32 (NVSS…TKGT) and 111 to 126 (GIPS…QSVG). Residues 127 to 144 (SSRANSLPRPLSPSPSLT) show a composition bias toward low complexity. The span at 145-163 (SEKHETAEPHGKHEREEEE) shows a compositional bias: basic and acidic residues. Positions 417–547 (SKYGLQKLKR…PLSSKSPEWH (131 aa)) constitute a C2 domain. The region spanning 573-683 (NMKHCGYLYA…WVMAMYRATG (111 aa)) is the PH domain. The MHD1 domain maps to 970–1157 (VDMDRVLSEQ…DMIEQCIQRT (188 aa)). Acidic residues predominate over residues 1386 to 1395 (REGEEEDNGD). The tract at residues 1386 to 1406 (REGEEEDNGDESTSNIPRGLP) is disordered.

Restricted to the nervous system at all stages of development and highly localized at synapses (at protein level).

It localises to the cytoplasmic vesicle membrane. Its subcellular location is the synapse. In terms of biological role, calcium-binding protein involved in exocytosis of vesicles filled with neurotransmitters and neuropeptides. May specifically mediate the Ca(2+)-dependent exocytosis of large dense-core vesicles (DCVs) and other dense-core vesicles. However, it probably also participates in small clear synaptic vesicles (SVs) exocytosis and it is unclear whether its function is related to Ca(2+) triggering. The polypeptide is Calcium-dependent secretion activator (Drosophila melanogaster (Fruit fly)).